A 113-amino-acid polypeptide reads, in one-letter code: Hydrogenase maturation factor HypA (113 aa).

Position 2 (histidine 2) interacts with Ni(2+). 4 residues coordinate Zn(2+): cysteine 73, cysteine 76, cysteine 89, and cysteine 92.

The protein belongs to the HypA/HybF family.

Its function is as follows. Involved in the maturation of [NiFe] hydrogenases. Required for nickel insertion into the metal center of the hydrogenase. In Azotobacter chroococcum mcd 1, this protein is Hydrogenase maturation factor HypA.